We begin with the raw amino-acid sequence, 279 residues long: Large ribosomal subunit protein uL2 (279 aa).

2 disordered regions span residues 1-28 (MPAR…TKEK) and 221-279 (RGTV…GRRR). The segment covering 12 to 22 (GRRNSSVLTRD) has biased composition (polar residues).

Belongs to the universal ribosomal protein uL2 family. As to quaternary structure, part of the 50S ribosomal subunit. Forms a bridge to the 30S subunit in the 70S ribosome.

In terms of biological role, one of the primary rRNA binding proteins. Required for association of the 30S and 50S subunits to form the 70S ribosome, for tRNA binding and peptide bond formation. It has been suggested to have peptidyltransferase activity; this is somewhat controversial. Makes several contacts with the 16S rRNA in the 70S ribosome. This chain is Large ribosomal subunit protein uL2, found in Rubrobacter xylanophilus (strain DSM 9941 / JCM 11954 / NBRC 16129 / PRD-1).